A 220-amino-acid polypeptide reads, in one-letter code: dTTP/UTP pyrophosphatase (220 aa).

D83 (proton acceptor) is an active-site residue.

It belongs to the Maf family. YhdE subfamily. The cofactor is a divalent metal cation.

It localises to the cytoplasm. The enzyme catalyses dTTP + H2O = dTMP + diphosphate + H(+). The catalysed reaction is UTP + H2O = UMP + diphosphate + H(+). Functionally, nucleoside triphosphate pyrophosphatase that hydrolyzes dTTP and UTP. May have a dual role in cell division arrest and in preventing the incorporation of modified nucleotides into cellular nucleic acids. The polypeptide is dTTP/UTP pyrophosphatase (Syntrophotalea carbinolica (strain DSM 2380 / NBRC 103641 / GraBd1) (Pelobacter carbinolicus)).